We begin with the raw amino-acid sequence, 114 residues long: UPF0102 protein HPSH_02690 (114 aa).

It belongs to the UPF0102 family.

The chain is UPF0102 protein HPSH_02690 from Helicobacter pylori (strain Shi470).